The primary structure comprises 175 residues: NADH-ubiquinone oxidoreductase chain 6 (175 aa).

A run of 5 helical transmembrane segments spans residues 1–21 (MMTYIVFILSIVFVMSFVGFA), 25–45 (SPIYGGLVLIISGGIGCAIVL), 47–67 (FGGSFLGLMVFLIYLGGMLVV), 88–108 (AVLAAFITGLLSELLTACYIL), and 149–169 (YGTWLVVVTGWSLLIGVLVIM).

This sequence belongs to the complex I subunit 6 family. In terms of assembly, core subunit of respiratory chain NADH dehydrogenase (Complex I) which is composed of 45 different subunits.

Its subcellular location is the mitochondrion inner membrane. The catalysed reaction is a ubiquinone + NADH + 5 H(+)(in) = a ubiquinol + NAD(+) + 4 H(+)(out). Its function is as follows. Core subunit of the mitochondrial membrane respiratory chain NADH dehydrogenase (Complex I) which catalyzes electron transfer from NADH through the respiratory chain, using ubiquinone as an electron acceptor. Essential for the catalytic activity and assembly of complex I. This chain is NADH-ubiquinone oxidoreductase chain 6 (MT-ND6), found in Canis lupus familiaris (Dog).